The chain runs to 237 residues: MAIYLTELDSKSLDFPPAENALADPNGLLAFGGDLTPERLIAAYHHGIFPWYGPGEPILWWSPSTRAVFDPNTFLPAKSLKKFQRKAQYQVSINHATPEVIKLCGNTRPAEETWLNEEMQAAYISLALQGVCHSVEVWQDQRLIGGFYGLSIGELFCGESMFSLETNASKIALWYFCRHFSEHGGKLIDCQVMNSHLHSLGAFTLPREEFLQRLLCLKQQRVTSGCFSPQWLKRHNA.

Belongs to the L/F-transferase family.

It is found in the cytoplasm. The enzyme catalyses N-terminal L-lysyl-[protein] + L-leucyl-tRNA(Leu) = N-terminal L-leucyl-L-lysyl-[protein] + tRNA(Leu) + H(+). The catalysed reaction is N-terminal L-arginyl-[protein] + L-leucyl-tRNA(Leu) = N-terminal L-leucyl-L-arginyl-[protein] + tRNA(Leu) + H(+). It catalyses the reaction L-phenylalanyl-tRNA(Phe) + an N-terminal L-alpha-aminoacyl-[protein] = an N-terminal L-phenylalanyl-L-alpha-aminoacyl-[protein] + tRNA(Phe). Functionally, functions in the N-end rule pathway of protein degradation where it conjugates Leu, Phe and, less efficiently, Met from aminoacyl-tRNAs to the N-termini of proteins containing an N-terminal arginine or lysine. In Vibrio vulnificus (strain CMCP6), this protein is Leucyl/phenylalanyl-tRNA--protein transferase (aat).